A 373-amino-acid chain; its full sequence is Gibberellin 3-beta-dioxygenase 2 (373 aa).

Positions 203-304 (MTATVHLNWY…RVSLGYFLGP (102 aa)) constitute a Fe2OG dioxygenase domain. Y212 is a 2-oxoglutarate binding site. Residues H227, D229, and H285 each coordinate Fe cation. 2 residues coordinate 2-oxoglutarate: R295 and S297.

The protein belongs to the iron/ascorbate-dependent oxidoreductase family. L-ascorbate is required as a cofactor. Requires Fe(2+) as cofactor. As to expression, highly expressed in elongating leaves. Expressed in unopened flowers. Expressed at low levels in leaf blades, shoots, rachis, stems and young panicles.

It catalyses the reaction gibberellin A20 + 2-oxoglutarate + O2 = gibberellin A1 + succinate + CO2. It participates in plant hormone biosynthesis; gibberellin biosynthesis. Functionally, catalyzes the 3-beta-hydroxylation of the inactive gibberellin precursors, leading to the formation of bioactive gibberellins. In vitro, converts the precursors GA20, GA5, GA44 and GA9 to the corresponding 3-beta-hydroxylated active products GA1, GA3, GA38 and GA4, respectively. Involved in the production of bioactive GA for vegetative growth and development. Controls the elongation of the vegetative shoot and plant height by the regulation of active gibberellin levels. In Oryza sativa subsp. japonica (Rice), this protein is Gibberellin 3-beta-dioxygenase 2.